A 234-amino-acid chain; its full sequence is Sugar fermentation stimulation protein A (234 aa).

The H-T-H motif DNA-binding region spans Leu-201–Ser-220.

The protein belongs to the SfsA family.

Its function is as follows. Binds to DNA non-specifically. Could be a regulatory factor involved in maltose metabolism. This Shigella dysenteriae serotype 1 (strain Sd197) protein is Sugar fermentation stimulation protein A.